A 410-amino-acid polypeptide reads, in one-letter code: MSIVQAKFEAKETSFHVEGYEKIEYDLVYVDGIFEIQNSALADVYQGFGRCLAIVDANVSRLYGNQIQAYFQYYGIELRLFPITITEPDKTIQTFERVIDVFADFKLVRKEPVLVVGGGLITDVVGFACSTYRRSSNYIRIPTTLIGLIDASVAIKVAVNHRKLKNRLGAYHASRKVFLDFSLLRTLPTDQVRNGMAELVKIAVVAHQEVFELLEKYGEELLRTHFGNIDATPEIKEIAHRLTYKAIHKMLELEVPNLHELDLDRVIAYGHTWSPTLELAPRLPMFHGHAVNVDMAFSATIAARRGYITIAERDRILGLMSRVGLSLDHPMLDIDILWRGTESITLTRDGLLRAAMPKPIGDCVFVNDLTREELAAALADHKELCTSYPRGGEGVDVYPVYQKELIGSVK.

NAD(+)-binding positions include 56-58 (DAN), 87-90 (EPDK), 119-123 (GLITD), 143-144 (TT), K156, K165, and 183-186 (LLRT). Zn(2+) contacts are provided by E198, H271, and H287.

This sequence belongs to the sugar phosphate cyclases superfamily. DDGS family. As to quaternary structure, homodimer. NAD(+) is required as a cofactor. Requires Co(2+) as cofactor. The cofactor is Zn(2+).

The enzyme catalyses D-sedoheptulose 7-phosphate = (R)-demethyl-4-deoxygadusol + phosphate + H2O + H(+). Catalyzes the conversion of sedoheptulose 7-phosphate to demethyl-4-deoxygadusol (DDG). Involved in the synthesis of the mycosporine-like amino acid shinorine, a natural sunscreen compound that protects the cell against UV radiation. The protein is Demethyl-4-deoxygadusol synthase of Trichormus variabilis (strain ATCC 29413 / PCC 7937) (Anabaena variabilis).